A 370-amino-acid polypeptide reads, in one-letter code: Chloromuconate cycloisomerase (370 aa).

The active-site Proton acceptor is K165. Residues D194, E220, and D245 each coordinate Mn(2+). E323 (proton donor) is an active-site residue.

This sequence belongs to the mandelate racemase/muconate lactonizing enzyme family. Requires Mn(2+) as cofactor.

The enzyme catalyses 2-[(2R)-2-chloro-2,5-dihydro-5-oxofuryl]acetate = 3-chloro-cis,cis-muconate + H(+). It functions in the pathway aromatic compound metabolism; 3-chlorocatechol degradation. Highly active toward chlorinated substrates but retains diminished activity toward the non-chlorinated substrates. The sequence is that of Chloromuconate cycloisomerase (clcB) from Pseudomonas putida (Arthrobacter siderocapsulatus).